Reading from the N-terminus, the 99-residue chain is uncharacterized protein (99 aa).

Positions 1–17 (MMMNSFFPAMALMVLVG) are cleaved as a signal peptide. C18 carries the N-palmitoyl cysteine lipid modification. C18 carries the S-diacylglycerol cysteine lipid modification.

Its subcellular location is the cell membrane. This is an uncharacterized protein from Escherichia coli O157:H7.